The chain runs to 66 residues: Large ribosomal subunit protein bL33 (66 aa).

It belongs to the bacterial ribosomal protein bL33 family.

This chain is Large ribosomal subunit protein bL33, found in Synechococcus sp. (strain CC9902).